The chain runs to 274 residues: 2,3,4,5-tetrahydropyridine-2,6-dicarboxylate N-succinyltransferase (274 aa).

Residues Arg-104 and Asp-141 each coordinate substrate.

The protein belongs to the transferase hexapeptide repeat family. In terms of assembly, homotrimer.

The protein localises to the cytoplasm. The catalysed reaction is (S)-2,3,4,5-tetrahydrodipicolinate + succinyl-CoA + H2O = (S)-2-succinylamino-6-oxoheptanedioate + CoA. It participates in amino-acid biosynthesis; L-lysine biosynthesis via DAP pathway; LL-2,6-diaminopimelate from (S)-tetrahydrodipicolinate (succinylase route): step 1/3. The chain is 2,3,4,5-tetrahydropyridine-2,6-dicarboxylate N-succinyltransferase from Shewanella amazonensis (strain ATCC BAA-1098 / SB2B).